We begin with the raw amino-acid sequence, 464 residues long: 3-isopropylmalate dehydratase large subunit (464 aa).

[4Fe-4S] cluster contacts are provided by C337, C397, and C400.

Belongs to the aconitase/IPM isomerase family. LeuC type 1 subfamily. In terms of assembly, heterodimer of LeuC and LeuD. It depends on [4Fe-4S] cluster as a cofactor.

The enzyme catalyses (2R,3S)-3-isopropylmalate = (2S)-2-isopropylmalate. The protein operates within amino-acid biosynthesis; L-leucine biosynthesis; L-leucine from 3-methyl-2-oxobutanoate: step 2/4. In terms of biological role, catalyzes the isomerization between 2-isopropylmalate and 3-isopropylmalate, via the formation of 2-isopropylmaleate. The sequence is that of 3-isopropylmalate dehydratase large subunit from Bacillus mycoides (strain KBAB4) (Bacillus weihenstephanensis).